A 328-amino-acid polypeptide reads, in one-letter code: Putative lipase LIH1 (328 aa).

Serine 181 acts as the Nucleophile in catalysis. Active-site charge relay system residues include aspartate 253 and histidine 315.

Belongs to the AB hydrolase superfamily. Lipase family.

It carries out the reaction a triacylglycerol + H2O = a diacylglycerol + a fatty acid + H(+). Lipases catalyze the hydrolysis of the ester bond of tri-, di- and monoglycerides of long-chain fatty acids into fatty acids and glycerol. This Saccharomyces cerevisiae (strain ATCC 204508 / S288c) (Baker's yeast) protein is Putative lipase LIH1.